Consider the following 660-residue polypeptide: Genome-linked protein precursor (660 aa).

An N-terminal signal peptide occupies residues 1–25 (MALLGIKLMTLVFAAWLSCCHSSSA). 2 consecutive transmembrane segments (helical) span residues 131–151 (AVGM…LVVY) and 165–185 (AVCV…ISWI). Residues 224-416 (VEGYKPFIIP…GLTSPDFKFE (193 aa)) form the Peptidase S39 domain. Residues His-272, Asp-304, and Ser-373 each act as for protease activity in the active site. Disordered regions lie at residues 463–490 (EEES…GCPP) and 595–660 (TKAP…AWVR).

The protein belongs to the peptidase S39B family.

It localises to the host membrane. Its function is as follows. Precursor from which the VPg molecule is probably released at the onset of the RNA synthesis. Essential for virus replication. This is Genome-linked protein precursor from Euphorbia pulcherrima (Poinsettia).